The sequence spans 1534 residues: Slit homolog 1 protein (1534 aa).

An N-terminal signal peptide occupies residues 1–33; that stretch reads MALTPGWGSSAGPVRPELWLLLWAAAWRLGASA. An LRRNT domain is found at 34 to 61; sequence CPALCTCTGTTVDCHGTGLQAIPKNIPR. LRR repeat units follow at residues 62-83, 86-107, 110-131, 134-155, 158-179, and 182-203; these read NTER…DFAG, QLRV…AFDD, ELER…LFQN, ALSR…AFRG, DLKN…AFRA, and GLEV…SFNH. Residue asparagine 72 is glycosylated (N-linked (GlcNAc...) asparagine). Asparagine 192 is a glycosylation site (N-linked (GlcNAc...) asparagine). The LRRCT 1 domain maps to 215-265; the sequence is NHLFCDCHLAWLSQWLRQRPTIGLFTQCSGPASLRGLNVAEVQKSEFSCSG. Residues 273-309 enclose the LRRNT 2 domain; the sequence is PTCTLSSGSCPAMCTCSNGIVDCRGKGLTAIPANLPE. The cysteines at positions 286 and 295 are disulfide-linked. LRR repeat units follow at residues 310–331, 334–355, 358–379, 382–403, and 406–427; these read TMTE…AFSP, KLRR…AFQG, SLNS…VFGG, TLQL…AFQD, and NLSL…TFTS. N-linked (GlcNAc...) asparagine glycosylation occurs at asparagine 406. Positions 439-489 constitute an LRRCT 2 domain; the sequence is NPFICDCNLKWLADFLRTNPIETSGARCASPRRLANKRIGQIKSKKFRCSA. 4 disulfides stabilise this stretch: cysteine 443–cysteine 466, cysteine 445–cysteine 487, cysteine 513–cysteine 519, and cysteine 517–cysteine 526. The 37-residue stretch at 504-540 folds into the LRRNT 3 domain; it reads NSECNSDVVCPHKCRCEANVVECSSLKLTKIPERIPQ. 5 LRR repeats span residues 541 to 562, 566 to 587, 590 to 611, 614 to 635, and 638 to 659; these read STAE…GMFK, HLKK…AFEG, SVSE…MFRG, GLRT…SFTG, and NVRL…AFDT. N-linked (GlcNAc...) asparagine glycosylation occurs at asparagine 571. A glycan (N-linked (GlcNAc...) asparagine) is linked at asparagine 630. An LRRCT 3 domain is found at 671–721; it reads NPFNCNCQLAWLGGWLRKRKIVTGNPRCQNPDFLRQIPLQDVAFPDFRCEE. Intrachain disulfides connect cysteine 675–cysteine 698 and cysteine 677–cysteine 719. The LRRNT 4 domain maps to 725-761; the sequence is EGGCLPRPQCPQECACLDTVVRCSNKHLRALPKGIPK. Residues asparagine 762, asparagine 801, and asparagine 806 are each glycosylated (N-linked (GlcNAc...) asparagine). LRR repeat units follow at residues 762–783, 785–806, 809–830, and 833–854; these read NVTE…LSTF, YLQL…SFTN, QLTT…AFQG, and SLRL…IFAD. Residues 866-916 enclose the LRRCT 4 domain; it reads NPLYCDCHLRWLSSWVKTGYKEPGIARCAGPQDMEGKLLLTTPAKKFECQG. EGF-like domains lie at 927–962, 964–1003, 1005–1041, 1043–1081, 1083–1119, and 1127–1163; these read DLCL…RDCE, SLDS…PTCG, NTDD…KACE, LVDL…DNCS, NQDD…QLCE, and PKSP…PECE. 18 cysteine pairs are disulfide-bonded: cysteine 929/cysteine 940, cysteine 934/cysteine 950, cysteine 952/cysteine 961, cysteine 968/cysteine 979, cysteine 973/cysteine 991, cysteine 993/cysteine 1002, cysteine 1009/cysteine 1020, cysteine 1014/cysteine 1029, cysteine 1031/cysteine 1040, cysteine 1047/cysteine 1060, cysteine 1054/cysteine 1069, cysteine 1071/cysteine 1080, cysteine 1087/cysteine 1098, cysteine 1092/cysteine 1107, cysteine 1109/cysteine 1118, cysteine 1131/cysteine 1142, cysteine 1136/cysteine 1151, and cysteine 1153/cysteine 1162. N-linked (GlcNAc...) asparagine glycosylation is present at asparagine 1026. N-linked (GlcNAc...) asparagine glycosylation is present at asparagine 1079. Residues 1166-1339 form the Laminin G-like domain; the sequence is LSVNFVDRDT…QMKPGVVPGC (174 aa). 3 N-linked (GlcNAc...) asparagine glycosylation sites follow: asparagine 1189, asparagine 1259, and asparagine 1306. Disulfide bonds link cysteine 1313-cysteine 1339, cysteine 1342-cysteine 1352, cysteine 1347-cysteine 1362, cysteine 1364-cysteine 1373, cysteine 1381-cysteine 1391, cysteine 1386-cysteine 1401, cysteine 1403-cysteine 1412, cysteine 1422-cysteine 1432, cysteine 1427-cysteine 1442, cysteine 1444-cysteine 1453, cysteine 1459-cysteine 1498, cysteine 1477-cysteine 1512, cysteine 1488-cysteine 1528, and cysteine 1492-cysteine 1530. 3 EGF-like domains span residues 1340–1374, 1377–1413, and 1418–1454; these read EPCR…LHCD, ADGP…ALCN, and LAEP…ELCE. In terms of domain architecture, CTCK spans 1459 to 1534; the sequence is CRGDPVRDFH…PTKCGCALCA (76 aa).

Interacts with ROBO1 and GREM1. As to expression, predominantly expressed in adult forebrain. Expressed in fetal brain, lung and kidney.

Its subcellular location is the secreted. In terms of biological role, thought to act as molecular guidance cue in cellular migration, and function appears to be mediated by interaction with roundabout homolog receptors. During neural development involved in axonal navigation at the ventral midline of the neural tube and projection of axons to different regions. SLIT1 and SLIT2 together seem to be essential for midline guidance in the forebrain by acting as repulsive signal preventing inappropriate midline crossing by axons projecting from the olfactory bulb. This Homo sapiens (Human) protein is Slit homolog 1 protein (SLIT1).